The sequence spans 378 residues: Tafazzin (378 aa).

Residues 1 to 137 (MFMVVCSNLR…RLRNPSKFWY (137 aa)) lie on the Mitochondrial intermembrane side of the membrane. Residues 46-112 (APEARPVPDE…DQDADPSLDV (67 aa)) form a disordered region. The span at 51–67 (PVPDERYPGSQQDRKDI) shows a compositional bias: basic and acidic residues. An intramembrane segment occupies 138–158 (VVSQFVVSAVGIFSKVVLMFL). The Mitochondrial intermembrane segment spans residues 159 to 378 (NKPRVYNRER…ETEKLHRERN (220 aa)). Positions 188–193 (HYSCFD) match the HXXXXD motif motif.

Belongs to the taffazin family. In terms of assembly, associates with multiple protein complexes. Association with large protein complexes occurs only in the presence of cardiolipin.

Its subcellular location is the mitochondrion outer membrane. It localises to the mitochondrion inner membrane. It is found in the mitochondrion. The protein localises to the mitochondrion membrane. The protein resides in the golgi apparatus membrane. Its subcellular location is the endoplasmic reticulum membrane. It catalyses the reaction 1'-[1,2-diacyl-sn-glycero-3-phospho],3'-[1-acyl-sn-glycero-3-phospho]-glycerol + a 1,2-diacyl-sn-glycero-3-phosphocholine = a cardiolipin + a 1-acyl-sn-glycero-3-phosphocholine. It carries out the reaction 1'-[1,2-di-(9Z,12Z-octadecadienoyl)-sn-glycero-3-phospho]-3'-[1-(9Z,12Z-octadecadienoyl)-sn-glycero-3-phospho]-glycerol + 1-hexadecanoyl-2-(9Z,12Z-octadecadienoyl)-sn-glycero-3-phosphocholine = 1',3'-bis-[1,2-di-(9Z,12Z-octadecadienoyl)-sn-glycero-3-phospho]-glycerol + 1-hexadecanoyl-sn-glycero-3-phosphocholine. The enzyme catalyses 1'-[1,2-di-(9Z,12Z-octadecadienoyl)-sn-glycero-3-phospho]-3'-[2-(9Z,12Z-octadecadienoyl)-sn-glycero-3-phospho]-glycerol + 1-hexadecanoyl-2-(9Z,12Z-octadecadienoyl)-sn-glycero-3-phosphocholine = 1',3'-bis-[1,2-di-(9Z,12Z-octadecadienoyl)-sn-glycero-3-phospho]-glycerol + 1-hexadecanoyl-sn-glycero-3-phosphocholine. The catalysed reaction is 1,2-di-(9Z,12Z-octadecadienoyl)-sn-glycero-3-phosphocholine + 1'-[1,2-di-(9Z,12Z-octadecadienoyl)-sn-glycero-3-phospho]-3'-[1-(9Z,12Z-octadecadienoyl)-sn-glycero-3-phospho]-glycerol = 1-(9Z,12Z)-octadecadienoyl-sn-glycero-3-phosphocholine + 1',3'-bis-[1,2-di-(9Z,12Z-octadecadienoyl)-sn-glycero-3-phospho]-glycerol. It catalyses the reaction 1-tetradecanoyl-sn-glycero-3-phosphocholine + 1',3'-bis-[1,2-di-(9Z,12Z-octadecadienoyl)-sn-glycero-3-phospho]-glycerol = 1-tetradecanoyl-2-(9Z,12Z-octadecadienoyl)-sn-glycero-3-phosphocholine + 1'-[1,2-di-(9Z,12Z-octadecadienoyl)-sn-glycero-3-phospho]-3'-[1-(9Z,12Z-octadecadienoyl)-sn-glycero-3-phospho]-glycerol. It carries out the reaction 1',3'-bis[1,2-di-(9Z-octadecenoyl)-sn-glycero-3-phospho]-glycerol + 1-nonadecanoyl-sn-glycero-3-phosphocholine = 1-nonadecanoyl-2-(9Z-octadecenoyl)-sn-glycero-3-phosphocholine + 1'-[1,2-di-(9Z-octadecenoyl)-sn-glycero-3-phospho]-3'-[1-(9Z-octadecenoyl)-sn-glycero-3-phospho]-glycerol. The enzyme catalyses a 1,2-diacyl-sn-glycero-3-phospho-(1'-sn-glycerol) + a 1-acyl-sn-glycero-3-phosphocholine = 1-acyl-sn-glycero-3-phospho-(1'-sn-glycerol) + a 1,2-diacyl-sn-glycero-3-phosphocholine. The catalysed reaction is 1-hexadecanoyl-2-(9Z,12Z-octadecadienoyl)-sn-glycero-3-phospho-(1'-sn-glycerol) + 1-hexadecanoyl-sn-glycero-3-phosphocholine = 1-hexadecanoyl-sn-glycero-3-phospho-(1'-sn-glycerol) + 1-hexadecanoyl-2-(9Z,12Z-octadecadienoyl)-sn-glycero-3-phosphocholine. It catalyses the reaction 1,2-di-(9Z-octadecenoyl)-sn-glycero-3-phospho-(1'-sn-glycerol) + 1-nonadecanoyl-sn-glycero-3-phosphocholine = 1-nonadecanoyl-2-(9Z-octadecenoyl)-sn-glycero-3-phosphocholine + 1-(9Z-octadecenoyl)-sn-glycero-3-phospho-(1'-sn-glycerol). It carries out the reaction a 1,2-diacyl-sn-glycero-3-phosphate + a 1-acyl-sn-glycero-3-phosphocholine = a 1-acyl-sn-glycero-3-phosphate + a 1,2-diacyl-sn-glycero-3-phosphocholine. The enzyme catalyses 1-hexadecanoyl-2-(9Z,12Z-octadecadienoyl)-sn-glycero-3-phosphate + 1-hexadecanoyl-sn-glycero-3-phosphocholine = 1-hexadecanoyl-2-(9Z,12Z-octadecadienoyl)-sn-glycero-3-phosphocholine + 1-hexadecanoyl-sn-glycero-3-phosphate. The catalysed reaction is 1-hexadecanoyl-2-(9Z,12Z-octadecadienoyl)-sn-glycero-3-phosphocholine + 1-(9Z-octadecenoyl)-sn-glycero-3-phosphate = 1-(9Z)-octadecenoyl-2-(9Z,12Z)-octadecadienoyl-sn-glycero-3-phosphate + 1-hexadecanoyl-sn-glycero-3-phosphocholine. It catalyses the reaction a 1-acyl-sn-glycero-3-phosphocholine + a 1,2-diacyl-sn-glycero-3-phosphoethanolamine = a 1-acyl-sn-glycero-3-phosphoethanolamine + a 1,2-diacyl-sn-glycero-3-phosphocholine. It carries out the reaction 1-hexadecanoyl-2-(9Z,12Z-octadecadienoyl)-sn-glycero-3-phosphoethanolamine + 1-hexadecanoyl-sn-glycero-3-phosphocholine = 1-hexadecanoyl-2-(9Z,12Z-octadecadienoyl)-sn-glycero-3-phosphocholine + 1-hexadecanoyl-sn-glycero-3-phosphoethanolamine. The enzyme catalyses 1,2-di-(9Z,12Z-octadecadienoyl)-sn-glycero-3-phosphoethanolamine + 1-tetradecanoyl-sn-glycero-3-phosphocholine = 1-(9Z,12Z-octadecadienoyl)-sn-glycero-3-phosphoethanolamine + 1-tetradecanoyl-2-(9Z,12Z-octadecadienoyl)-sn-glycero-3-phosphocholine. The catalysed reaction is 1'-[1,2-diacyl-sn-glycero-3-phospho],3'-[1-acyl-sn-glycero-3-phospho]-glycerol + a 1,2-diacyl-sn-glycero-3-phosphoethanolamine = a cardiolipin + a 1-acyl-sn-glycero-3-phosphoethanolamine. It catalyses the reaction 1-hexadecanoyl-2-(9Z,12Z-octadecadienoyl)-sn-glycero-3-phosphoethanolamine + 1'-[1,2-di-(9Z,12Z-octadecadienoyl)-sn-glycero-3-phospho]-3'-[1-(9Z,12Z-octadecadienoyl)-sn-glycero-3-phospho]-glycerol = 1',3'-bis-[1,2-di-(9Z,12Z-octadecadienoyl)-sn-glycero-3-phospho]-glycerol + 1-hexadecanoyl-sn-glycero-3-phosphoethanolamine. It carries out the reaction 1'-[1-(9Z,12Z-octadecadienoyl)-2-(9Z-octadecenoyl)-sn-glycero-3-phospho]-3'-[1-(9Z,12Z-octadecadienoyl)-sn-glycero-3-phospho]-glycerol + 1',3'-bis-[1,2-di-(9Z,12Z-octadecadienoyl)-sn-glycero-3-phospho]-glycerol = 1'-[1,2-di-(9Z,12Z-octadecadienoyl)-sn-glycero-3-phospho]-3'-[1-(9Z,12Z-octadecadienoyl)-2-(9Z-octadecenoyl)-sn-glycero-3-phospho]-glycerol + 1'-[1,2-di-(9Z,12Z-octadecadienoyl)-sn-glycero-3-phospho]-3'-[1-(9Z,12Z-octadecadienoyl)-sn-glycero-3-phospho]-glycerol. The enzyme catalyses 1,2-di-(9Z-hexadecenoyl)-sn-glycero-3-phosphocholine + 1-hexadecanoyl-sn-glycero-3-phosphocholine = 1-hexadecanoyl-2-(9Z-hexadecenoyl)-sn-glycero-3-phosphocholine + 1-(9Z-hexadecenoyl)-sn-glycero-3-phosphocholine. The catalysed reaction is 1,2-dioctadecanoyl-sn-glycero-3-phosphocholine + 1-hexadecanoyl-sn-glycero-3-phosphocholine = 1-hexadecanoyl-2-octadecanoyl-sn-glycero-3-phosphocholine + 1-octadecanoyl-sn-glycero-3-phosphocholine. It catalyses the reaction 1,2-di-(9Z-octadecenoyl)-sn-glycero-3-phosphocholine + 1-hexadecanoyl-sn-glycero-3-phosphocholine = 1-hexadecanoyl-2-(9Z-octadecenoyl)-sn-glycero-3-phosphocholine + 1-(9Z-octadecenoyl)-sn-glycero-3-phosphocholine. It carries out the reaction 1,2-di-(9Z,12Z-octadecadienoyl)-sn-glycero-3-phosphocholine + 1-(9Z-octadecenoyl)-sn-glycero-3-phosphocholine = 1-(9Z)-octadecenoyl-2-(9Z,12Z)-octadecadienoyl-sn-glycero-3-phosphocholine + 1-(9Z,12Z)-octadecadienoyl-sn-glycero-3-phosphocholine. The enzyme catalyses 1,2-di-(9Z,12Z,15Z-octadecatrienoyl)-sn-glycero-3-phosphocholine + 1-tetradecanoyl-sn-glycero-3-phosphocholine = 1-tetradecanoyl-2-(9Z,12Z,15Z-octadecatrienoyl)-sn-glycero-3-phosphocholine + 1-(9Z,12Z,15Z-octadecatrienoyl)-sn-glycero-3-phosphocholine. The catalysed reaction is 1-nonadecanoyl-sn-glycero-3-phosphocholine + 1-octadecanoyl-2-(9Z-octadecenoyl)-sn-glycero-3-phosphocholine = 1-nonadecanoyl-2-(9Z-octadecenoyl)-sn-glycero-3-phosphocholine + 1-octadecanoyl-sn-glycero-3-phosphocholine. It catalyses the reaction 1-(9Z)-octadecenoyl-2-octadecanoyl-sn-glycero-3-phosphocholine + 1-nonadecanoyl-sn-glycero-3-phosphocholine = 2-octadecanoyl-sn-glycero-3-phosphocholine + 1-nonadecanoyl-2-(9Z-octadecenoyl)-sn-glycero-3-phosphocholine. It participates in phospholipid metabolism. Acyltransferase required to remodel newly synthesized phospholipid cardiolipin (1',3'-bis-[1,2-diacyl-sn-glycero-3-phospho]-glycerol or CL), a key component of the mitochondrial inner membrane, with tissue specific acyl chains necessary for adequate mitochondrial function. Its role in cellular physiology is to improve mitochondrial performance. CL is critical for the coassembly of lipids and proteins in mitochondrial membranes. For instance, remodeling of the acyl groups of CL in the mitochondrial inner membrane affects the assembly and stability of respiratory chain complex IV and its supercomplex forms. Catalyzes the transacylation between phospholipids and lysophospholipids, with the highest rate being between phosphatidylcholine (1,2-diacyl-sn-glycero-3-phosphocholine or PC) and CL. Catalyzes both 1-acyl-sn-glycero-3-phosphocholine (lysophosphatidylcholine or LPC) reacylation and PC-CL transacylation, that means, it exchanges acyl groups between CL and PC by a combination of forward and reverse transacylations. Also catalyzes transacylations between other phospholipids such as phosphatidylethanolamine (1,2-diacyl-sn-glycero-3-phosphoethanolamine or PE) and CL, between PC and PE, and between PC and phosphatidate (1,2-diacyl-sn-glycero-3-phosphate or PA), although at lower rate. Not regiospecific, it transfers acyl groups into any of the sn-1 and sn-2 positions of the monolysocardiolipin (MLCL), which is an important prerequisite for uniformity and symmetry in CL acyl distribution. Cannot transacylate dilysocardiolipin (DLCL), thus, the role of MLCL is limited to that of an acyl acceptor. CoA-independent, it can reshuffle molecular species within a single phospholipid class. Redistributes fatty acids between MLCL, CL, and other lipids, which prolongs the half-life of CL. Its action is completely reversible, which allows for cyclic changes, such as fission and fusion or bending and flattening of the membrane. Hence, by contributing to the flexibility of the lipid composition, it plays an important role in the dynamics of mitochondria membranes. Essential for the final stage of spermatogenesis, spermatid individualization. Required for the initiation of mitophagy. The polypeptide is Tafazzin (Drosophila melanogaster (Fruit fly)).